The sequence spans 289 residues: Cbb3-type cytochrome c oxidase subunit FixP (289 aa).

Topologically, residues 1–33 (MADKHKHVDEVSGVETTGHEWDGIRELNNPMPR) are cytoplasmic. A helical transmembrane segment spans residues 34–56 (WWVYSFYATIIWAIGYAIAYPSW). The Periplasmic segment spans residues 57-289 (PMLTEATKGM…VFVHSLGGGE (233 aa)). Cytochrome c domains follow at residues 110 to 198 (FAVS…VSLT) and 205 to 286 (HLVQ…HSLG). Heme c-binding residues include cysteine 123, cysteine 126, histidine 127, methionine 175, cysteine 218, cysteine 221, histidine 222, and methionine 263.

It belongs to the CcoP / FixP family. In terms of assembly, component of the cbb3-type cytochrome c oxidase at least composed of FixN, FixO, FixQ and FixP. It depends on heme c as a cofactor.

It localises to the cell inner membrane. It functions in the pathway energy metabolism; oxidative phosphorylation. C-type cytochrome. Part of the cbb3-type cytochrome c oxidase complex. FixP subunit is required for transferring electrons from donor cytochrome c via its heme groups to FixO subunit. From there, electrons are shuttled to the catalytic binuclear center of FixN subunit where oxygen reduction takes place. The complex also functions as a proton pump. The polypeptide is Cbb3-type cytochrome c oxidase subunit FixP (Rhizobium meliloti (strain 1021) (Ensifer meliloti)).